The sequence spans 166 residues: Polyadenylate-binding protein 2 (166 aa).

The RRM domain occupies 55 to 132 (QSVYVGNVDY…RPLKVTPKRT (78 aa)). Residues 129 to 166 (PKRTNVPGMSRGRGRGRGRGRGRGRGGYRGRARGFAPY) form a disordered region. Residues 140 to 160 (GRGRGRGRGRGRGRGGYRGRA) show a composition bias toward basic residues.

Its subcellular location is the nucleus. In Schizosaccharomyces pombe (strain 972 / ATCC 24843) (Fission yeast), this protein is Polyadenylate-binding protein 2 (pab2).